A 282-amino-acid chain; its full sequence is Glutamyl endopeptidase (282 aa).

An N-terminal signal peptide occupies residues Met1–Ala27. Residues Lys28 to Ser66 constitute a propeptide that is removed on maturation. Catalysis depends on charge relay system residues His117, Asp159, and Ser235.

Belongs to the peptidase S1B family. In terms of assembly, monomer.

It localises to the secreted. It catalyses the reaction Preferential cleavage: Glu-|-Xaa, Asp-|-Xaa.. Its activity is regulated as follows. Inhibited by diisopropyl fluorophosphate. Its function is as follows. Exhibits a significant hydrolytic activity for the carbonyl side of glutamic acid. Shows activity toward human fibronectin and type 1 collagen. This chain is Glutamyl endopeptidase (gseA), found in Staphylococcus epidermidis.